The chain runs to 431 residues: Glutamate-1-semialdehyde 2,1-aminomutase (431 aa).

K265 carries the N6-(pyridoxal phosphate)lysine modification.

This sequence belongs to the class-III pyridoxal-phosphate-dependent aminotransferase family. HemL subfamily. As to quaternary structure, homodimer. Requires pyridoxal 5'-phosphate as cofactor.

Its subcellular location is the cytoplasm. The catalysed reaction is (S)-4-amino-5-oxopentanoate = 5-aminolevulinate. It functions in the pathway porphyrin-containing compound metabolism; protoporphyrin-IX biosynthesis; 5-aminolevulinate from L-glutamyl-tRNA(Glu): step 2/2. The protein is Glutamate-1-semialdehyde 2,1-aminomutase of Vibrio vulnificus (strain YJ016).